A 438-amino-acid chain; its full sequence is Transposon Ty2-LR1 Gag polyprotein (438 aa).

3 stretches are compositionally biased toward polar residues: residues 1–11 (MESQQLHQNPH), 19–39 (ASVTSKEVPSNQDPLAVSASN), and 49–60 (KVNSQQETTPGT). Disordered stretches follow at residues 1-86 (MESQ…GQYQ), 364-397 (KNVSRTSPNTTNTKVTTRNYHRTNSSKPRAAKAH), and 419-438 (SSQYLSDDNELSLRPATERI). Residues 295-397 (ENNINVSDRL…SSKPRAAKAH (103 aa)) are RNA-binding. Residues 369 to 381 (TSPNTTNTKVTTR) show a composition bias toward low complexity.

In terms of assembly, homotrimer.

It is found in the cytoplasm. Capsid protein (CA) is the structural component of the virus-like particle (VLP), forming the shell that encapsulates the retrotransposons dimeric RNA genome. The particles are assembled from trimer-clustered units and there are holes in the capsid shells that allow for the diffusion of macromolecules. CA also has nucleocapsid-like chaperone activity, promoting primer tRNA(i)-Met annealing to the multipartite primer-binding site (PBS), dimerization of Ty2 RNA and initiation of reverse transcription. This chain is Transposon Ty2-LR1 Gag polyprotein (TY2A-LR1), found in Saccharomyces cerevisiae (strain ATCC 204508 / S288c) (Baker's yeast).